A 124-amino-acid polypeptide reads, in one-letter code: Glycine cleavage system H protein (124 aa).

A Lipoyl-binding domain is found at 22 to 104 (LVITGITDHA…YGKGWIYKIK (83 aa)). Residue K63 is modified to N6-lipoyllysine.

This sequence belongs to the GcvH family. As to quaternary structure, the glycine cleavage system is composed of four proteins: P, T, L and H. (R)-lipoate serves as cofactor.

Functionally, the glycine cleavage system catalyzes the degradation of glycine. The H protein shuttles the methylamine group of glycine from the P protein to the T protein. The polypeptide is Glycine cleavage system H protein (Acinetobacter baumannii (strain ACICU)).